We begin with the raw amino-acid sequence, 546 residues long: 2-isopropylmalate synthase (546 aa).

Positions Ile-8–Ser-271 constitute a Pyruvate carboxyltransferase domain. Mn(2+) contacts are provided by Asp-17, His-208, His-210, and Asn-244. Residues Gln-408 to Lys-546 form a regulatory domain region.

The protein belongs to the alpha-IPM synthase/homocitrate synthase family. LeuA type 1 subfamily. In terms of assembly, homodimer. It depends on Mn(2+) as a cofactor.

The protein localises to the cytoplasm. It catalyses the reaction 3-methyl-2-oxobutanoate + acetyl-CoA + H2O = (2S)-2-isopropylmalate + CoA + H(+). The protein operates within amino-acid biosynthesis; L-leucine biosynthesis; L-leucine from 3-methyl-2-oxobutanoate: step 1/4. Its function is as follows. Catalyzes the condensation of the acetyl group of acetyl-CoA with 3-methyl-2-oxobutanoate (2-ketoisovalerate) to form 3-carboxy-3-hydroxy-4-methylpentanoate (2-isopropylmalate). This Prochlorococcus marinus (strain MIT 9215) protein is 2-isopropylmalate synthase.